A 421-amino-acid chain; its full sequence is Ribulose bisphosphate carboxylase large chain (421 aa).

Residues Asn68 and Thr118 each contribute to the substrate site. Residue Lys120 is the Proton acceptor of the active site. Lys122 serves as a coordination point for substrate. Residues Lys146, Asp148, and Glu149 each contribute to the Mg(2+) site. Lys146 carries the N6-carboxylysine modification. Catalysis depends on His239, which acts as the Proton acceptor. Residues Arg240, His272, and Ser324 each contribute to the substrate site.

This sequence belongs to the RuBisCO large chain family. Type I subfamily. Heterohexadecamer of 8 large chains and 8 small chains; disulfide-linked. The disulfide link is formed within the large subunit homodimers. Mg(2+) is required as a cofactor. In terms of processing, the disulfide bond which can form in the large chain dimeric partners within the hexadecamer appears to be associated with oxidative stress and protein turnover.

It localises to the plastid. The protein resides in the chloroplast. It carries out the reaction 2 (2R)-3-phosphoglycerate + 2 H(+) = D-ribulose 1,5-bisphosphate + CO2 + H2O. The catalysed reaction is D-ribulose 1,5-bisphosphate + O2 = 2-phosphoglycolate + (2R)-3-phosphoglycerate + 2 H(+). Functionally, ruBisCO catalyzes two reactions: the carboxylation of D-ribulose 1,5-bisphosphate, the primary event in carbon dioxide fixation, as well as the oxidative fragmentation of the pentose substrate in the photorespiration process. Both reactions occur simultaneously and in competition at the same active site. The polypeptide is Ribulose bisphosphate carboxylase large chain (rbcL) (Aegilops tauschii (Tausch's goatgrass)).